Reading from the N-terminus, the 314-residue chain is DNA-directed RNA polymerase subunit alpha (314 aa).

The segment at 1-228 is alpha N-terminal domain (alpha-NTD); sequence MIEIEKPKIE…EHLNIFVGLT (228 aa). The segment at 245–314 is alpha C-terminal domain (alpha-CTD); that stretch reads KEKVLEMTIE…ELGLSLRKDD (70 aa).

It belongs to the RNA polymerase alpha chain family. In terms of assembly, homodimer. The RNAP catalytic core consists of 2 alpha, 1 beta, 1 beta' and 1 omega subunit. When a sigma factor is associated with the core the holoenzyme is formed, which can initiate transcription.

The catalysed reaction is RNA(n) + a ribonucleoside 5'-triphosphate = RNA(n+1) + diphosphate. Its function is as follows. DNA-dependent RNA polymerase catalyzes the transcription of DNA into RNA using the four ribonucleoside triphosphates as substrates. The protein is DNA-directed RNA polymerase subunit alpha of Geobacillus thermodenitrificans (strain NG80-2).